A 371-amino-acid polypeptide reads, in one-letter code: Probable trehalose-phosphate phosphatase 1 (371 aa).

Belongs to the trehalose phosphatase family. A divalent metal cation serves as cofactor. In terms of tissue distribution, expressed in roots and shoots.

It carries out the reaction alpha,alpha-trehalose 6-phosphate + H2O = alpha,alpha-trehalose + phosphate. Its pathway is glycan biosynthesis; trehalose biosynthesis. Functionally, removes the phosphate from trehalose 6-phosphate to produce free trehalose. Trehalose accumulation in plant improves abiotic stress tolerance. This Oryza sativa subsp. japonica (Rice) protein is Probable trehalose-phosphate phosphatase 1 (TPP1).